Here is a 382-residue protein sequence, read N- to C-terminus: Apolipoprotein A-IV (382 aa).

An N-terminal signal peptide occupies residues Met-1–Ala-20. A run of 13 repeats spans residues Asp-33–Leu-54, Ala-60–Val-81, Pro-82–Arg-103, Pro-115–Gly-136, Pro-137–Thr-158, Ser-159–Thr-180, Pro-181–Thr-202, Pro-203–Ala-224, Pro-225–Lys-246, Lys-247–Ala-268, Pro-269–Gln-286, Glu-287–Gly-308, and Pro-309–Gly-330. The 13 X 22 AA approximate tandem repeats stretch occupies residues Asp-33–Gly-330. The tract at residues Glu-362 to Ser-382 is disordered.

This sequence belongs to the apolipoprotein A1/A4/E family. Homodimer.

The protein localises to the secreted. In terms of biological role, may have a role in chylomicrons and VLDL secretion and catabolism. Required for efficient activation of lipoprotein lipase by ApoC-II; potent activator of LCAT. Apoa-IV is a major component of HDL and chylomicrons. This is Apolipoprotein A-IV (APOA4) from Acinonyx jubatus (Cheetah).